Here is a 103-residue protein sequence, read N- to C-terminus: Small ribosomal subunit protein uS14c (103 aa).

The interval 26–56 is disordered; that stretch reads SSKKKIRSKVSPLSLSEKTKMQEKLQSLPRN.

It belongs to the universal ribosomal protein uS14 family. As to quaternary structure, part of the 30S ribosomal subunit.

Its subcellular location is the plastid. The protein localises to the chloroplast. Functionally, binds 16S rRNA, required for the assembly of 30S particles. This chain is Small ribosomal subunit protein uS14c, found in Saccharum officinarum (Sugarcane).